A 4115-amino-acid polypeptide reads, in one-letter code: MDPSIPSTSHRSVPPDRGVQPDRNLHVQELENRIQSLVHGGQRDDVKLKELQDIWASLENHFTASSHEKVVEKLVLSILQLFCNTSPQFISENNTQMLRKLMLEILLRLSNTDPVKTHSKEILKQMMRLIGVENEENAILAIRILIDQGRYGKLDYCREVQSLLLLMRTMVKELAESGRTAEMFLVRELTVPPATSSEEQLIAEYLTKCYYAQPVILNAKDGLQGPKFNMIPSAHQSIKVLLEMPFLVIFFYQNFKTTVQTEALEFTRLCLDFLNVPVPADKTKYHDVLTDDFVTVQSKILSFVNIMAKIPAFMELLQQNGDSLVSGTMQMLERCPPDLISVRREVLLAVKYFTAGEMKSRFFTMLPRLISEHFILGTGFTAIELLRVFMYQMLADLMHHTRDTISYELISHVVFVFCRALHDPNNSAQVLIMSARLLNSLAESLCRMESQAPIRDLMLEILEAQVSKLKVMAVYHIPILFQQYGTEIEYEYRNYERESEKPKVNVMKESTQREVPKRRTRKLSMDSVEELEFLVTDNVNMTESEQKRNELPTPTKEHTKKTSPEAILNSLYAASTQPLGLSETRNLIKYVMHTCKYVTGQLKISRPSTEMYHCVRERDLYERLLRYGIMCMDIYVLPAVKNQAQAHASQRTKEEKEALESLANVFTSIDHAIFRELFEKYMDFLIERIYNRNYPLQLMVNTFLVRNEVPFFASTMLSFLMSRMKMLEVSSDKTALYVKLFKIIFSAIGANNSTIYQDRMLTNYLPEILKQSTVLALTAREPTNYFLLLRSLFRSIGGGAQDMLYGTFLQLLPNLLQFLNKLTSCQHRIQMREIFVELCLTVPVRLSSLLPYLPLLMDPLVCAMNGSPNLVTQGLRTLELCVDNLQPEYLLENMLPVRGALMQGLYRVISKAPDTASMKVAFRILGKFGGANRKLLNQPQLLQVRRFPDSYLNMEFSQMGLDGNHSLHLPISELMRVAADQMRYPADQIFNPNPTNIPSPHVKKCCMELSKAVLLAGLGSSGSHTVPTKDLPKVLKKLLTGFNVNQRTTEIYICPKENDREVYVNALLVVAYGIWNKDGLRQLYSRFFVKIIRQFALMGAIEFVSGNGWMQNADEEGALPLCLDSSVLVDALITCLSETSTSFFYGGIMCLRYINETLELALPDINQMSKVPLCKYLMEKVLKLCHGPAQYARAGGINAFMYMIEHYPRKFIMDFVIDVVDAIMEVLLGLVEEISSGSADIATDCFKKMMRTYFIQEENQEEENLTLASIFVAVFGKHYFHGNDRIRDYMAQLMEYCMIQSRLETNLDKFYYRFREFFEPELIRIMETLPTMSLTDAQGSLDGLQRFVFICPEGFEFEKDSEIYKRYLVHLLDLAQTDTQTINQRNAFKKCETCPSHFLPPFPILHHIDQMRGSALQCLVIAYDRLRKQLENTTRDIEDEQLMSEILAMNSPRITVEQIFENNESWRRLMTVLLRAITDKDIPDIADKLYPALMRVTPVPTNIIATFGANYIRNISRANDENDPDRTITYHDCRKFSILVELNPKILVRNIVKNLANHIIKYNMSDSISNILVMPNEAKEEEVEAYEAEKKRGVRDLEMIGYTAKMLAGCSMEILTAEIIIDITRFAAKFEYTYSQDVLPNWIDDVVKLMNKAPVEVWKFFLLRESVANPARRSLIRRAIIFPTSEPLRKVFMQTPEYLERLIDSNLDNYDNSDERVIIDREMFLLSLVDRISRNCHDWLSDPSLSPIPQLRAFFNGTEFMDRYSVRSIMVEEAREIRVISMTEDKYKVPKLMTNIFLRYLRFVRKYFPVKLIFYRNNIQDYDMFFNVVSVFMGKFQTDFTFVREYLEVEVIPKMPLWWRREIFIKVMVMFEENAQKACKDFRILKALQYLILPSLQWAFERYDTDEIVGSAPIDDSENAADAESSNNTENLVGRLTSVIGAHRLDFSDGMIILFYQLCTLFVQHAPEHIHNNHCKKQGGRLRNFMLFAWPCLATPNRQDPTLRYTGFFFLANIIERFTINRKIVLQVFQQLMTNYQQDTRDQVRRAIDILTPALKVRMEDGHQQILTQVKKLLIEEGHILQHIQHILGTIIRNWRVYYHIRHEILTPLLNAVQRALTMPNSVIEHAQTRKQAIEVCEMIIKWELLKLHKTDHIITDDEANEVDKLYEKLRGASSPDRYDFEDQQMKKDLLDSQRVITREHVDIVVNMLMRFCVMFHTSAQNNSTSGQQGAELVKKCQLLLRICLRSSVWGDFVNIRTSILNNYIVVPSELIPKQNEVQNPEYVLAANNSQYTIEMLNVIVPILPKPTLKNVLNILQPALIGVIQSSGHMSRGITQLISRLGERTSVSTNGLDEFELLNSYIVKYIHDSFSTILRCVLIWISIYSLNPFFRNQNAPVLSVLGSFTLLRAMCGHEAGFLDNFMPTFLKVMDRVAREHLQFNSRQQPSVQKNLSELTCVCMELVRQRIDHIGLELKRTTITDVMTELIFKSTSERVIQVCAKLIGAMLSPTDMEFSLHTCLQQLVRIQSVIISKFKNCKEVITEFLVVVIKVFENAEYRNSEYGARLWEAFFWGLKSTDPTTRDSFSAVWEMTWPQMSTADICHRMKYIMKHQDWSKFKHAFWLKFALWGMLRAISKRPKSVNNPKKKVVMLNCATPWRTIEYAARLKEQHMETDPMIKLEEPEPMEVDQPKNAPAEEPKDNKLSLDDFLAGQQELLEEAAEFDFADALDTVSQITFGINDNGMTSRIWVTFFKSFWASLQPREVEDFTALIVPFLSSGVHNQFQTGVQDSVLAVWLEAIGEKVPLPSSLIEFISSKHECWYTGISILESSIWSIPKQLNNTLLGNINCDRSLTSNIETLESLGALYKELAEFDQYSAIWERRSVFPETMKAMSALQLGDMDTAASILEQAMNKEMEHLPVPTANAAPPGPNDRQISPIYDREYEQWMQMYMSSCSELLQWQTVAEISNSREVQDVRGIITAASHIPDWNLVEDCRSMLSGCIPPDFHLEYTVFNLMSTVMRLNESVNVPHARERCKQALQECIEAHISRFRALPSVTSYGHVKILQSMNLVRDIEESMEVRIALLEQPTKMDQSLMMDMKSLMKVYRNRTPTTADDMGFVATWYDWRNQIHGMMLQRFEWFDKSSLSTTGNGNQSIVPIHSMAQAQLTVAKHAKSLGFNNLAKDLLNKLGGLPAIPMMDAVDKVCTYGKTLRALSNNVDDERSKQELLYEALEVLEDVRIDDLQKDQITSLLFNRATIHSALGQTANADRAFSAAVQLTDMKTANVPTGIKLFRQWGNHLNKLFFDQSQMVSKETSENFGRQALSCYFVAARVDGDLKARKPIAKILWIAKHLMASGASEALNRVIQKHLPSLNLFNWLYWIPQLVTEISHQPNNNFIMVLCRVSLKSESFNSNGASKVSKSGISGPRKQSKVTPRFPRFLIEQNLNQCDDIAAAHPLQVFYHIREAVSVEDIDAVFAQDYTEEEMSMDTPDDEAFSNDPPFSRALKICLKYRPTDIRVLHRILKELDQMTETWVERHLRFAVAIKDQLFEDFAEQMDARFNEMQFSGAVYELTQKWKRQLEEDYKFFENNYNLDLLEIRNRRRVIVTKGYMGTVPSQIMFEKELSQVFTDPPEMKDEFEYVTEITKVIFDQLDIRSPQAPRPALFVRTVMEWIRIIRRRFDRLPRRVPMEISSPYLARFSHRTGCIEMPYDLLNVLRAKNHSLNATNQTGQYISMMSRFEPYFEIVMRGGQVTRKIYLRGQTGKSAAFYLKKSIKDERTNRVPQMFKHVDYLLQNDRETARRHLSVPSLLQMRVSKNTTFCEIASVQPYAIPQDCSRNYPASQIEVMHPYEVLTSTFNGLYSPDDMVMHFYERFADSCSSIGQPLPQNIDPSMASQPRLTEPHHVKNIIYEDFARDMIPFRLLTDYLLARYPDPVMFYAMRKQFIHSFAVLSIIEYHCNLSPMTPHQMIISMNTGVLNNPFYRFELGTGQLMDIEHFAHEVPFRLTPNLMMFVGVAQDGDLLWSMAAVARCLMKKEPGAVMRPLLWDEYANNVNYENMIYICHAANSYVKCIENKVAMTNRHDAKVKKDDCNSLIIRAKDSDNLSRMPPTYHAWF.

A compositionally biased stretch (polar residues) spans 1–11; sequence MDPSIPSTSHR. 2 disordered regions span residues 1–21 and 543–563; these read MDPS…GVQP and ESEQ…KKTS. Residues 544–563 show a composition bias toward basic and acidic residues; the sequence is SEQKRNELPTPTKEHTKKTS. TPR repeat units lie at residues 1341–1374 and 1820–1853; these read LDGL…LLDL and QDYD…EVIP. The tract at residues 2678-2701 is disordered; sequence LEEPEPMEVDQPKNAPAEEPKDNK. The 614-residue stretch at 2808-3421 folds into the FAT domain; that stretch reads LIEFISSKHE…SNGASKVSKS (614 aa). The TPR 3 repeat unit spans residues 2855–2888; sequence IETLESLGALYKELAEFDQYSAIWERRSVFPETM. Residues 3740-4100 enclose the PI3K/PI4K catalytic domain; it reads EPYFEIVMRG…CNSLIIRAKD (361 aa). A G-loop region spans residues 3746-3752; the sequence is VMRGGQV. The tract at residues 3959 to 3967 is catalytic loop; the sequence is NLSPMTPHQ. Residues 3979–4006 are activation loop; it reads NPFYRFELGTGQLMDIEHFAHEVPFRLT. The region spanning 4083-4115 is the FATC domain; it reads DAKVKKDDCNSLIIRAKDSDNLSRMPPTYHAWF.

The protein belongs to the PI3/PI4-kinase family. TRA1 subfamily.

Its subcellular location is the nucleus. In terms of biological role, influences germ cell fate in hermaphrodites. Acts downstream of tra-2 and tra-3 and through the Tip60 histone acetyltransferase complex to regulate germ cell fate decisions. Required for spermatogenesis and embryonic development. Acts with tra-2 to promote expression of fog-3 and control male tail development. Involved in the negative regulation of vulval development. In Caenorhabditis briggsae, this protein is Transcription-associated protein 1.